The sequence spans 1407 residues: MKFKKKNIYWVSPTKGVESMGCGLVKEFPCKDIGSIIDKITPNVSTIINLMEGVYRGNFSYLMTNFVILFKGEGRDKTIIDLEGRQRFTLCTISDIHFKDLTIKNGFGNAISGIFDGGAIYAYDSQIHFVNVALIDNTCSASGGGIFLYNCYFNVEHSLFQNNTANSGGGFILLLSASNITNSSFLHNRVFQEGKGGAIQVFISFMSIELSLFAYNIAPYSGAIDMVGGNLTSKYSKFIENHSNIGGGFGLYFISNVIFESCEFIGNRANSTGGLSFLTAQSMLRFSLCIFKDNFAPNCGIVESHSISPLLFESCSFTGDVPTAVQIALYDNYCFLKVQNCHFSEIQGVLMYADSISNIIIDSSSFTNVSNRIIDVGNEADILIISSTFYNITIDEYLVSLSNGNFLAYNMDFNNNIVLALIKSSVGGSVTIVSSSMSNNYVSTSLISLSNGYSVYIENCEVKNNTGLFKGCFIDTDHTGSETIVQSLFENNRSPFGPILYFSNPETMLSTNYSSNFRDILFSNNFAAYSGALVYFSQNVSLPNISCTNCIYDNNTAVFGELVNSAFYSFNVSITPVIYPFQDLIIEIFALDFFGNLVRGTSDLGFFAIPCSDAYVEGNLFAVLNENGSAIFSNIKLSSNPNSICNLTFLSVPIVSENGPITIPITFSYCSQDRELVMIKSIYYCLKTIKVTSFVKFLVGTLAAILLIILIISGFISLKYRKKRVIRYSNPLFLCIILVGCIIFLITIPVLFGSTSATCKIRFPIIVIGSCLVTSSVFIKQFRIWRLIKDIQLLRETNVENKYLLKFISILMVIPIIIVICSFFIFPTHEKYTFNQRDITITHYCSDGSYLAYVIIFLVYQMAILLFGCYLVIVCRKFRSIPGTFNEATYIGILIYNYTVVLIVAIPLAYVFNKNPLANFLIFSISIIVFVLSTIILLFIPKFHFLLRKKVIISSLEKLIKEQEAIVQRNKDILYFYDMYLAEERTGIQQQQRQGNLYNNNSLGRSISSNTRKRSNNNINNNNNNNSFNMTGFSDSSSTISNPNLTSFTSSPSSLNSSSDSDSTPDFNDPNFLEYYNERVKNYGKRKSIEKNKINNSIPNSPKSTTSLPTSLPSSSSSSSSSSSSSSSSSSSSSSSSSITPKSNTPILSPSSQSSKTINKGGSGSGNSSSIPNYQNIKSPNTPKSNKSSPNLSIPVNKNSKVSKLSSNQISSPKSIKSDKSPITIKDFDNSSDLSDSSNSLKSDSSIGSEQFNEKVINRIFNIHQDKKVKTTKQQSDSTLSSIGSDSSPNFNENINNPNINPNNNNNPNNNNNNNNNNNNNNNNNNNINNNNNNANNNNSDTDDSSPNFNENIEKKNVVKTKTNFLNQFHQKKQKDSDNRKNYNISPINISDEKVPPLSPINLSKRK.

At 1–696 (MKFKKKNIYW…KTIKVTSFVK (696 aa)) the chain is on the extracellular side. 2 N-linked (GlcNAc...) asparagine glycosylation sites follow: asparagine 43 and asparagine 58. 2 PbH1 repeats span residues 93-118 (ISDIHFKDLTIKNGFGNAISGIFDGG) and 129-150 (FVNVALIDNTCSASGGGIFLYN). Residues asparagine 162, asparagine 179, asparagine 182, asparagine 230, asparagine 241, asparagine 270, asparagine 368, asparagine 391, asparagine 464, asparagine 512, asparagine 539, asparagine 544, asparagine 554, asparagine 571, asparagine 627, and asparagine 646 are each glycosylated (N-linked (GlcNAc...) asparagine). The stretch at 254 to 279 (ISNVIFESCEFIGNRANSTGGLSFLT) is one PbH1 3 repeat. One copy of the PbH1 4 repeat lies at 452 to 476 (GYSVYIENCEVKNNTGLFKGCFIDT). The helical transmembrane segment at 697-717 (FLVGTLAAILLIILIISGFIS) threads the bilayer. Topologically, residues 718–731 (LKYRKKRVIRYSNP) are cytoplasmic. The chain crosses the membrane as a helical span at residues 732 to 752 (LFLCIILVGCIIFLITIPVLF). Topologically, residues 753–758 (GSTSAT) are extracellular. Residues 759 to 779 (CKIRFPIIVIGSCLVTSSVFI) form a helical membrane-spanning segment. Topologically, residues 780–806 (KQFRIWRLIKDIQLLRETNVENKYLLK) are cytoplasmic. A helical membrane pass occupies residues 807–827 (FISILMVIPIIIVICSFFIFP). Over 828–853 (THEKYTFNQRDITITHYCSDGSYLAY) the chain is Extracellular. A helical transmembrane segment spans residues 854–874 (VIIFLVYQMAILLFGCYLVIV). Residues 875 to 890 (CRKFRSIPGTFNEATY) are Cytoplasmic-facing. The helical transmembrane segment at 891 to 911 (IGILIYNYTVVLIVAIPLAYV) threads the bilayer. Residues 912-919 (FNKNPLAN) lie on the Extracellular side of the membrane. The chain crosses the membrane as a helical span at residues 920-940 (FLIFSISIIVFVLSTIILLFI). At 941–1407 (PKFHFLLRKK…LSPINLSKRK (467 aa)) the chain is on the cytoplasmic side. A compositionally biased stretch (polar residues) spans 991-1004 (QQRQGNLYNNNSLG). Disordered regions lie at residues 991 to 1072 (QQRQ…DPNF), 1084 to 1248 (GKRK…SSIG), 1267 to 1351 (KKVK…NFNE), and 1369 to 1407 (FHQKKQKDSDNRKNYNISPINISDEKVPPLSPINLSKRK). Positions 1005–1029 (RSISSNTRKRSNNNINNNNNNNSFN) are enriched in low complexity. Positions 1030 to 1040 (MTGFSDSSSTI) are enriched in polar residues. A compositionally biased stretch (low complexity) spans 1041–1071 (SNPNLTSFTSSPSSLNSSSDSDSTPDFNDPN). Residues 1084–1093 (GKRKSIEKNK) are compositionally biased toward basic and acidic residues. Low complexity-rich tracts occupy residues 1099-1147 (PNSP…NTPI), 1154-1246 (SSKT…SDSS), and 1276-1339 (SDST…NNNN). Residues 1315–1344 (NNNNNNNNNNNNNINNNNNNANNNNSDTDD) adopt a coiled-coil conformation.

Belongs to the G-protein coupled receptor 3 family. GABA-B receptor subfamily.

It localises to the membrane. In Dictyostelium discoideum (Social amoeba), this protein is Metabotropic glutamate receptor-like protein P (grlP).